A 434-amino-acid polypeptide reads, in one-letter code: Neuropeptide receptor 22 (434 aa).

Residues 1-55 (MDEGGGIGSSLLSRITTTASEIMMRNEPTTTENPAVQEMNHIYHLTPSMKMLCIL) are Extracellular-facing. Residues 56 to 76 (FYSILCVCCVYGNVLVILVIV) traverse the membrane as a helical segment. Over 77-86 (YFKRLRTATN) the chain is Cytoplasmic. The chain crosses the membrane as a helical span at residues 87-107 (ILILNLAVADLLISVFCIPFS). At 108–128 (YWQVLIYDDQRWLFGSMMCSL) the chain is on the extracellular side. An intrachain disulfide couples Cys126 to Cys204. A helical membrane pass occupies residues 129-149 (LAFLQAMAVFLSAWTLVVISF). Residues 150–169 (DRWMAIMFLLTPNIRITRRR) are Cytoplasmic-facing. The helical transmembrane segment at 170–190 (ALYLVAATWIFSILMALPLLF) threads the bilayer. The Extracellular portion of the chain corresponds to 191-226 (TTRFFEDQDGLPNCGENWTYFGDSGEQVRKVYSSMV). The N-linked (GlcNAc...) asparagine glycan is linked to Asn207. The chain crosses the membrane as a helical span at residues 227-247 (LILQYVVPQAVLIITYTHIGI). Residues 248–277 (KMWNSRVPGMQNGATKKMIVDRHESVKKLV) lie on the Cytoplasmic side of the membrane. A helical membrane pass occupies residues 278-298 (PMVILISALFALCWLPLLILI). Residues 299–310 (NVIPEFYPDINS) are Extracellular-facing. A helical transmembrane segment spans residues 311–331 (WGYILYLWWFAHGLAMSHSMV). The Cytoplasmic segment spans residues 332–434 (NPIIYFIRNA…VRNNSANSLA (103 aa)).

The protein belongs to the G-protein coupled receptor 1 family. As to expression, expressed in many cells, mainly in the head region, with expression detected in the head muscles, I2 neurons, MC neurons, RIH neuron, AIA neurons, AUA neurons, ASK neurons, ASI neurons, a few B-type motorneurons in the posterior ventral nerve cord, pharyngeal muscles, body wall muscles, the intestine and a few classes of unidentified cells anterior to the nerve ring. Expression in the MC neurons is important to mediate suppression of feeding while expression in the RIH neuron is important for the facilitation of egg-laying. No expression detected in other tissues including hypodermis.

It is found in the cell membrane. Its function is as follows. Receptor for the LURY-1-1 and LURY-1-2 peptides which control food-related processes including feeding, lifespan, egg-laying and roaming behavior. Receptor for flp-7 which stimulates serotonin-induced fat loss. Serotonin induces secretion of flp-7 from neurons and binding to npr-22 which leads to induction of the atgp-1 lipase and subsequent fat loss. Acts in vitro as a receptor for the flp-7 FMRFamide-like neuropeptides TPMQRSSMVRF-amide, SPMQRSSMVRF-amide, SPMERSAMVRF-amide and SPMDRSKMVRF-amide. Also acts in vitro as a receptor for a number of other FMRFamide-like neuropeptides including the flp-1 neuropeptide PNFMRY-amide, the flp-9 neuropeptide KPSFVRF-amide, the flp-11 neuropeptides AMRNALVRF-amide, ASGGMRNALVRF-amide and NGAPQPFVRF-amide, the flp-13 neuropeptides AADGAPLIRF-amide, ASPSAPLIRF-amide, SPSAVPLIRF-amide, SAAAPLIRF-amide and ASSAPLIRF-amide, and the flp-22 neuropeptide SPSAKWMRF-amide. The SPMERSAMVRF-amide neuropeptide from flp-7 acts as the strongest in vitro activator of npr-22. This is Neuropeptide receptor 22 from Caenorhabditis elegans.